A 421-amino-acid polypeptide reads, in one-letter code: Succinate--CoA ligase [ADP-forming] subunit beta, mitochondrial (421 aa).

Residues 1–26 (MRGLVNKLVSRSLSISGKWQNQQLRR) constitute a mitochondrion transit peptide. The ATP-grasp domain occupies 35-278 (AELMGKYGVN…PTQEDPREVA (244 aa)). Residues Lys74, 81–83 (GRG), and Glu141 each bind ATP. The Mg(2+) site is built by Asn233 and Asp247. Residues Asn298 and 355 to 357 (GIM) contribute to the substrate site.

This sequence belongs to the succinate/malate CoA ligase beta subunit family. As to quaternary structure, heterodimer of an alpha and a beta subunit. Requires Mg(2+) as cofactor.

It localises to the mitochondrion. It catalyses the reaction succinate + ATP + CoA = succinyl-CoA + ADP + phosphate. The protein operates within carbohydrate metabolism; tricarboxylic acid cycle; succinate from succinyl-CoA (ligase route): step 1/1. Its function is as follows. Succinyl-CoA synthetase functions in the citric acid cycle (TCA), coupling the hydrolysis of succinyl-CoA to the synthesis of ATP and thus represents the only step of substrate-level phosphorylation in the TCA. The beta subunit provides nucleotide specificity of the enzyme and binds the substrate succinate, while the binding sites for coenzyme A and phosphate are found in the alpha subunit. In Arabidopsis thaliana (Mouse-ear cress), this protein is Succinate--CoA ligase [ADP-forming] subunit beta, mitochondrial.